The following is a 1139-amino-acid chain: Autophagy-related protein 23 (1139 aa).

9 disordered regions span residues 1-148 (MFQR…EMSP), 225-327 (STDK…YDDE), 356-388 (LTTA…SVKD), 475-569 (KNEK…DTAG), 648-674 (KKIS…KTEY), 720-767 (RQES…RETE), 786-828 (EDAQ…SKLR), 935-961 (AAVE…TEDL), and 977-1012 (HERD…ELRT). Basic and acidic residues predominate over residues 7–18 (SAIDRTIAEEQA). Residues 19 to 37 (RQQTATQSRSPSRTGSTSS) show a composition bias toward low complexity. Coiled-coil stretches lie at residues 142-170 (KLQE…LLRS) and 215-259 (DMVM…STDQ). Composition is skewed to basic and acidic residues over residues 225–247 (STDK…KLEE), 261–273 (KTSD…DAQD), 373–385 (ATRE…DVAS), and 475–494 (KNEK…KLES). Residues 323–495 (SYDDEIPQLQ…TDLTKKLESK (173 aa)) adopt a coiled-coil conformation. A compositionally biased stretch (low complexity) spans 496-522 (PAPAMLTPAATPMPTVLQPAATSATAA). Residues 526 to 537 (GKKKNNKKKKGK) are compositionally biased toward basic residues. The stretch at 566–1067 (DTAGNAELKA…AAQTKLVASS (502 aa)) forms a coiled coil. The segment covering 651–661 (SSSTSDAEASS) has biased composition (low complexity). Basic and acidic residues-rich tracts occupy residues 728-767 (ATKE…RETE), 786-815 (EDAQ…KAEQ), 935-945 (AAVEERDRIED), and 977-1011 (HERD…DELR). Positions 1082 to 1132 (SPAGAPDTVYLKTILLQFLEQKDTKLRAQLVPVLGKLLRFDKTDEQKWQKA) constitute a GRIP domain.

This sequence belongs to the ATG23 family. Forms a complex with ATG9 and ATG27.

It localises to the cytoplasm. It is found in the preautophagosomal structure membrane. Functionally, required for cytoplasm to vacuole transport (Cvt) vesicle formation and efficient autophagy. Plays a role in ATG protein retrieval from the pre-autophagosomal structure (PAS) and is especially required for autophagy-dependent cycling of ATG9. Autophagy is required for proper vegetative growth, asexual/sexual reproduction, and full virulence. Autophagy is particularly involved in the biosynthesis of deoxynivalenol (DON), an important virulence determinant. The protein is Autophagy-related protein 23 of Gibberella zeae (strain ATCC MYA-4620 / CBS 123657 / FGSC 9075 / NRRL 31084 / PH-1) (Wheat head blight fungus).